An 83-amino-acid chain; its full sequence is U5-theraphotoxin-Hs1a 6 (83 aa).

An N-terminal signal peptide occupies residues 1–21 (MKTSMFLTLTGLVLLFVVCYA). A propeptide spanning residues 22–49 (SESEEKEFPKELLSSIFAADSDFKVEER) is cleaved from the precursor. 3 cysteine pairs are disulfide-bonded: Cys51–Cys63, Cys56–Cys68, and Cys62–Cys75.

This sequence belongs to the neurotoxin 10 (Hwtx-1) family. 51 (Hntx-8) subfamily. Hntx-8 sub-subfamily. As to expression, expressed by the venom gland.

The protein resides in the secreted. In terms of biological role, agglutinates erythrocytes. The polypeptide is U5-theraphotoxin-Hs1a 6 (Cyriopagopus schmidti (Chinese bird spider)).